A 967-amino-acid chain; its full sequence is MAELNFKAIEEKWQKRWLEAKIFEPNIRDKPKEKKFYITVAFPYLSGHLHVGHARTYTIPDVIARFKRMQGYNVLFPMAWHITGSPIVGIAERIKNRDPKTIWIYRDVYKVPEEILWTFEDPINIVKYFMKAAKETFIRAGFSVDWSREFYTTSLFPPFSKFIEWQFWKLKEKGYIVKGAHRVRWDPVVGTPLGDHDLMEGEDVPILDYIIIKFELRENGEVIYLPAATLRPETVYGVTNMWVNPNATYVKAKVRRKDKEETWIVSKEAAYKLSFQDREIEVIEEFKGEKLIGKYVRNPVSGDEVIILPAEFVDPDNATGVVMSVPAHAPFDHVALEDLKRETEILEKYDIDPRIVENITYISLIKLEGYGDFPAVEEVNKLGIKSQKDKEKLEQATKTIYKAEYHKGIFKVPPYEGKPVQEVKEAIAKEMLEKGIAEIMYEFAEKNVISRFGNRAVIKIIHDQWFIDYGNPEWKEKARKALERMKILPETRRAQFEAIIDWLDKKACARKIGLGTPLPWDPEWVIESLSDSTIYMAYYTISRHINKLRQEGKLDPEKLTPEFFDYIFLEEFSEDKEKELEKKTGIPAEIIHEMKEEFEYWYPLDWRCSGKDLIPNHLTFFIFNHVAIFREEHWPKGIAVNGFGTLEGQKMSKSKGNVLNFIDAIEENGADVVRLYIMSLAEHDSDFDWRRKEVGKLRKQIERFYELISQFAEYEVKGNVELKDIDRWMLHRLNKAIKETTNALEEFRTRTAVQWAFYSIMNDLRWYLRRTEGRDDEAKRYVLRTLADVWVRLMAPFTPHICEELWEKLGGEGFVSLAKWPEPVEEWWNETIEAEEEFIRSVMEDIKEIIEVAKIENAKRAYIYTAEDWKWKVAEVVSEKRDFKSSMEELMKDSEIRKHGKEVAKIVQKLIKERTFDVKRINEEKALREAKEFMEKELGIEIIINPTEDKGGKKKQAMPLKPAIFIE.

The short motif at 43–53 (PYLSGHLHVGH) is the 'HIGH' region element. The 'KMSKS' region motif lies at 650–654 (KMSKS). Lysine 653 is a binding site for ATP.

Belongs to the class-I aminoacyl-tRNA synthetase family.

The protein resides in the cytoplasm. The enzyme catalyses tRNA(Leu) + L-leucine + ATP = L-leucyl-tRNA(Leu) + AMP + diphosphate. The protein is Leucine--tRNA ligase of Pyrococcus horikoshii (strain ATCC 700860 / DSM 12428 / JCM 9974 / NBRC 100139 / OT-3).